A 111-amino-acid chain; its full sequence is Small ribosomal subunit protein bS16 (111 aa).

This sequence belongs to the bacterial ribosomal protein bS16 family.

The polypeptide is Small ribosomal subunit protein bS16 (Rickettsia africae (strain ESF-5)).